We begin with the raw amino-acid sequence, 616 residues long: Dihydroxy-acid dehydratase (616 aa).

Position 81 (D81) interacts with Mg(2+). Residue C122 participates in [2Fe-2S] cluster binding. Mg(2+) is bound by residues D123 and K124. Residue K124 is modified to N6-carboxylysine. C195 lines the [2Fe-2S] cluster pocket. A Mg(2+)-binding site is contributed by E491. Catalysis depends on S517, which acts as the Proton acceptor.

It belongs to the IlvD/Edd family. In terms of assembly, homodimer. [2Fe-2S] cluster serves as cofactor. It depends on Mg(2+) as a cofactor.

It carries out the reaction (2R)-2,3-dihydroxy-3-methylbutanoate = 3-methyl-2-oxobutanoate + H2O. The enzyme catalyses (2R,3R)-2,3-dihydroxy-3-methylpentanoate = (S)-3-methyl-2-oxopentanoate + H2O. It functions in the pathway amino-acid biosynthesis; L-isoleucine biosynthesis; L-isoleucine from 2-oxobutanoate: step 3/4. It participates in amino-acid biosynthesis; L-valine biosynthesis; L-valine from pyruvate: step 3/4. Functions in the biosynthesis of branched-chain amino acids. Catalyzes the dehydration of (2R,3R)-2,3-dihydroxy-3-methylpentanoate (2,3-dihydroxy-3-methylvalerate) into 2-oxo-3-methylpentanoate (2-oxo-3-methylvalerate) and of (2R)-2,3-dihydroxy-3-methylbutanoate (2,3-dihydroxyisovalerate) into 2-oxo-3-methylbutanoate (2-oxoisovalerate), the penultimate precursor to L-isoleucine and L-valine, respectively. This is Dihydroxy-acid dehydratase from Escherichia coli O8 (strain IAI1).